The primary structure comprises 499 residues: Alpha-internexin (499 aa).

A head region spans residues 1 to 87 (MSFGSEHYLC…SQAAARTNEY (87 aa)). At serine 72 the chain carries Phosphoserine. Residues 88–129 (KIIRTNEKEQLQGLNDRFAVFIEKVHQLETQNRALEAELAAL) are coil 1A. An IF rod domain is found at 94 to 407 (EKEQLQGLND…KLLEGEETRF (314 aa)). Positions 130–142 (RQRHAEPSRVGEL) are linker 1. Positions 143–238 (FQRELRDLRA…QVHDEEVAEL (96 aa)) are coil 1B. Serine 219 is modified (phosphoserine). Positions 239 to 262 (LATLQASSQAAAEVDVTVAKPDLT) are linker 2. The interval 263–408 (SALREIRAQY…LLEGEETRFS (146 aa)) is coil 2. At lysine 290 the chain carries N6-acetyllysine. Serine 335 is subject to Phosphoserine. The segment at 409-499 (TSGLSISGLN…EETTISSQKI (91 aa)) is tail. A disordered region spans residues 441 to 466 (STGLSLKKEEEEEEASKVASKKTSQI). 2 positions are modified to phosphoserine: serine 469 and serine 496.

The protein belongs to the intermediate filament family. As to quaternary structure, forms homodimers (in vitro). Forms heterodimers with NEFL, NEFM or NEFH (in vitro). O-glycosylated. In terms of tissue distribution, found predominantly in adult CNS.

In terms of biological role, class-IV neuronal intermediate filament that is able to self-assemble. It is involved in the morphogenesis of neurons. It may form an independent structural network without the involvement of other neurofilaments or it may cooperate with NEFL to form the filamentous backbone to which NEFM and NEFH attach to form the cross-bridges. May also cooperate with the neuronal intermediate filament protein PRPH to form filamentous networks. The polypeptide is Alpha-internexin (INA) (Homo sapiens (Human)).